Reading from the N-terminus, the 427-residue chain is Adenylosuccinate synthetase (427 aa).

Residues glycine 12–lysine 18 and glycine 40–threonine 42 contribute to the GTP site. Aspartate 13 serves as the catalytic Proton acceptor. Positions 13 and 40 each coordinate Mg(2+). IMP-binding positions include aspartate 13–lysine 16, asparagine 38–histidine 41, threonine 128, arginine 142, glutamine 223, threonine 238, and arginine 302. Histidine 41 serves as the catalytic Proton donor. Threonine 298–arginine 304 is a substrate binding site. GTP-binding positions include arginine 304, lysine 330–aspartate 332, and glycine 412–glycine 414.

It belongs to the adenylosuccinate synthetase family. In terms of assembly, homodimer. Requires Mg(2+) as cofactor.

It localises to the cytoplasm. The catalysed reaction is IMP + L-aspartate + GTP = N(6)-(1,2-dicarboxyethyl)-AMP + GDP + phosphate + 2 H(+). It functions in the pathway purine metabolism; AMP biosynthesis via de novo pathway; AMP from IMP: step 1/2. Its function is as follows. Plays an important role in the de novo pathway of purine nucleotide biosynthesis. Catalyzes the first committed step in the biosynthesis of AMP from IMP. In Pelotomaculum thermopropionicum (strain DSM 13744 / JCM 10971 / SI), this protein is Adenylosuccinate synthetase.